Reading from the N-terminus, the 138-residue chain is Transcription factor Atoh7-b (138 aa).

The 53-residue stretch at Lys33 to Leu85 folds into the bHLH domain.

It is found in the nucleus. The protein localises to the perikaryon. The protein resides in the cell projection. It localises to the axon. Functionally, transcription factor that binds to DNA at the consensus sequence 5'-CAG[GC]TG-3'. Positively regulates the determination of retinal ganglion cell fate and formation of the optic nerve and retino-hypothalamic tract. Required for retinal circadian rhythm photoentrainment. Plays a role in brainstem auditory signaling and binaural processing. Regulates the differentiation of olfactory receptor neurons. During retinal neurogenesis, activates the transcription of several genes such as brn3d, coe3, cbfa2t2, glis2, elrC and xgadd45-gamma. The sequence is that of Transcription factor Atoh7-b from Xenopus laevis (African clawed frog).